The primary structure comprises 400 residues: Argininosuccinate synthase (400 aa).

Position 10–18 (10–18 (AYSGGVDTS)) interacts with ATP. Residue Tyr89 participates in L-citrulline binding. ATP is bound at residue Gly119. Thr121, Asn125, and Asp126 together coordinate L-aspartate. Asn125 is an L-citrulline binding site. The L-citrulline site is built by Arg129, Ser177, Ser186, Glu262, and Tyr274.

Belongs to the argininosuccinate synthase family. Type 1 subfamily. As to quaternary structure, homotetramer.

Its subcellular location is the cytoplasm. It carries out the reaction L-citrulline + L-aspartate + ATP = 2-(N(omega)-L-arginino)succinate + AMP + diphosphate + H(+). The protein operates within amino-acid biosynthesis; L-arginine biosynthesis; L-arginine from L-ornithine and carbamoyl phosphate: step 2/3. This is Argininosuccinate synthase from Synechococcus sp. (strain JA-2-3B'a(2-13)) (Cyanobacteria bacterium Yellowstone B-Prime).